The sequence spans 326 residues: MSDTSKGIPQEQLPSQELHPPPMPVINLGHLSLDDPTVRSRVVNDIAKACRDLGYFQVISHGISQSVMDGAIEAASEFFKLPNEIKKEYASDDIRQPVRYDTSSKDGISMSRAFLKHYAHPLCDWLQYWPQQPPIYREYMAKYAVEVRVVALKLMEAILEGLGIGKEYMQEKFEEGLQLLSVNCYPKVSQSDTSIGLAAHSDYGLLTILLTSCQGLEVVDRSSNSWKVVQQLPHALHVHVGDHMEVLSNGRIKTVVHRAVLNPQEARISLASIHGFALHEKVSSAKELVDEENPQKYKENSFNDFLEHLTANMDNRQRNFLESLRM.

Polar residues predominate over residues 1–15 (MSDTSKGIPQEQLPS). Residues 1-21 (MSDTSKGIPQEQLPSQELHPP) are disordered. The region spanning 175–276 (EGLQLLSVNC…RISLASIHGF (102 aa)) is the Fe2OG dioxygenase domain. Positions 200, 202, and 257 each coordinate Fe cation. Arginine 267 is a binding site for 2-oxoglutarate.

This sequence belongs to the iron/ascorbate-dependent oxidoreductase family. Fe(2+) serves as cofactor. It depends on L-ascorbate as a cofactor. In terms of tissue distribution, expressed at very low levels in roots, leaves, stems and seeds.

It catalyses the reaction a (2S)-flavan-4-one + 2-oxoglutarate + O2 = a (2R,3R)-dihydroflavonol + succinate + CO2. It participates in secondary metabolite biosynthesis; flavonoid biosynthesis. Functionally, catalyzes the 3-beta-hydroxylation of 2S-flavanones to 2R,3R-dihydroflavonols which are intermediates in the biosynthesis of flavonols, anthocyanidins, catechins and proanthocyanidins in plants. Converts (2S)-eriodictyol to (+)-taxifolin and (2S)-naringenin to (+)-(2R/3R)-dihydrokaempferol in vitro. This is Flavanone 3-dioxygenase 3 from Oryza sativa subsp. japonica (Rice).